Here is a 456-residue protein sequence, read N- to C-terminus: Decaprenyl-diphosphate synthase (456 aa).

Lys183, Arg186, and His216 together coordinate isopentenyl diphosphate. The Mg(2+) site is built by Asp223 and Asp227. Residue Arg233 coordinates isopentenyl diphosphate.

It belongs to the FPP/GGPP synthase family. The cofactor is Mg(2+).

It is found in the mitochondrion. It catalyses the reaction 7 isopentenyl diphosphate + (2E,6E)-farnesyl diphosphate = all-trans-decaprenyl diphosphate + 7 diphosphate. It functions in the pathway cofactor biosynthesis; ubiquinone biosynthesis. Functionally, supplies decaprenyl diphosphate, the precursor for the side chain of the isoprenoid quinones ubiquinone-10. In Dictyostelium discoideum (Social amoeba), this protein is Decaprenyl-diphosphate synthase (coq1).